Reading from the N-terminus, the 201-residue chain is Large ribosomal subunit protein uL4 (201 aa).

The interval K44 to R68 is disordered.

It belongs to the universal ribosomal protein uL4 family. As to quaternary structure, part of the 50S ribosomal subunit.

Functionally, one of the primary rRNA binding proteins, this protein initially binds near the 5'-end of the 23S rRNA. It is important during the early stages of 50S assembly. It makes multiple contacts with different domains of the 23S rRNA in the assembled 50S subunit and ribosome. Its function is as follows. Forms part of the polypeptide exit tunnel. This chain is Large ribosomal subunit protein uL4, found in Xanthomonas oryzae pv. oryzae (strain MAFF 311018).